Here is a 466-residue protein sequence, read N- to C-terminus: Paraneoplastic antigen Ma3 homolog (466 aa).

Positions Arg379–Thr408 are disordered. Residues Ser384–Gly399 show a composition bias toward basic residues. The segment at Thr415–Asn432 adopts a CCHC-type zinc-finger fold. Residues Gln441–Lys466 form a disordered region. Over residues Ala445–His460 the composition is skewed to basic and acidic residues.

This sequence belongs to the PNMA family. Expressed in the cerebrum and cerebellum.

It localises to the nucleus. The protein resides in the nucleolus. The sequence is that of Paraneoplastic antigen Ma3 homolog (Pnma3) from Mus musculus (Mouse).